The chain runs to 63 residues: Lantipeptide Flvbeta.a (63 aa).

Positions 1–28 (MSEKNMEKAGVVKADELDEMIDETTGGA) are cleaved as a propeptide — cleaved by FlvT. 2,3-didehydrobutyrine; by FlvM2 is present on residues Thr30, Thr33, Thr38, and Thr39. The segment at residues 43–49 (SKGLQNC) is a cross-link (lanthionine (Ser-Cys); by FlvM2). 2,3-didehydrobutyrine; by FlvM2 occurs at positions 54 and 55.

Post-translationally, maturation of FlvA2 peptides involves the enzymatic conversion of Thr, and Ser into dehydrated AA and the formation of thioether bonds with cysteines. Modifications are processed by the flavecin synthetase FlvM2. This is followed by membrane translocation and cleavage of the modified precursor. In terms of processing, contains DL-lanthionine, when coepressed in E.coli with the flavecin synthetase FlvM2.

It localises to the secreted. Lanthionine-containing peptide that does probably not show antibacterial activity, since its analog [+3]Flvbeta.a does not show antibacterial activity against M.luteus. Also does not show antibiotic activity when tested with [Del2]Flvalpha.a, an analog of Flvalpha.a, which is encoded by the same operon than Flvbeta.a. The bactericidal activity of lantibiotics is based on depolarization of energized bacterial cytoplasmic membranes, initiated by the formation of aqueous transmembrane pores. The protein is Lantipeptide Flvbeta.a of Ruminococcus flavefaciens.